Reading from the N-terminus, the 327-residue chain is GTP 3',8-cyclase (327 aa).

One can recognise a Radical SAM core domain in the interval 7-232 (HHDRQFRYLR…IKRDRTAGPA (226 aa)). A GTP-binding site is contributed by Arg-16. Residues Cys-23 and Cys-27 each coordinate [4Fe-4S] cluster. Tyr-29 is an S-adenosyl-L-methionine binding site. Cys-30 is a binding site for [4Fe-4S] cluster. A GTP-binding site is contributed by Arg-66. An S-adenosyl-L-methionine-binding site is contributed by Gly-70. Thr-97 serves as a coordination point for GTP. Ser-121 is a binding site for S-adenosyl-L-methionine. Lys-158 contacts GTP. Met-192 provides a ligand contact to S-adenosyl-L-methionine. [4Fe-4S] cluster-binding residues include Cys-255 and Cys-258. 260-262 (RLR) serves as a coordination point for GTP. Cys-272 lines the [4Fe-4S] cluster pocket.

This sequence belongs to the radical SAM superfamily. MoaA family. Monomer and homodimer. It depends on [4Fe-4S] cluster as a cofactor.

The enzyme catalyses GTP + AH2 + S-adenosyl-L-methionine = (8S)-3',8-cyclo-7,8-dihydroguanosine 5'-triphosphate + 5'-deoxyadenosine + L-methionine + A + H(+). Its pathway is cofactor biosynthesis; molybdopterin biosynthesis. In terms of biological role, catalyzes the cyclization of GTP to (8S)-3',8-cyclo-7,8-dihydroguanosine 5'-triphosphate. This is GTP 3',8-cyclase from Synechococcus elongatus (strain ATCC 33912 / PCC 7942 / FACHB-805) (Anacystis nidulans R2).